A 271-amino-acid polypeptide reads, in one-letter code: Transmembrane protein 150A (271 aa).

The Cytoplasmic segment spans residues 1 to 2 (MT). Residues 3–23 (AWILLPVSLSAFSITGIWTVY) traverse the membrane as a helical segment. Topologically, residues 24 to 75 (AMAVMNRHVCPVENWSYNESCSPDPAEQGGPKSCCTLDDVPLISKCGTYPPE) are extracellular. Residues N37 and N41 are each glycosylated (N-linked (GlcNAc...) asparagine). Residues 76-96 (SCLFSLIGNMGAVMVALICLL) form a helical membrane-spanning segment. Residues 97–108 (RYGQLLEQSRHS) are Cytoplasmic-facing. A helical transmembrane segment spans residues 109 to 129 (WINTTALITGCTNAAGLVVVG). Residues 130 to 140 (NFQVDHAKSLH) are Extracellular-facing. The helical transmembrane segment at 141-161 (YIGTGVAFTAGLLFVCLHCVL) threads the bilayer. The Cytoplasmic segment spans residues 162–178 (FYHGATTPLDMAMAYLR). Residues 179-199 (SVLAVIAFITLVLSGVFFLHE) form a helical membrane-spanning segment. The Extracellular segment spans residues 200-211 (SSQLQHGAALCE). Residues 212–232 (WVFVLDILIFYGTFSYEFGTI) traverse the membrane as a helical segment. The Cytoplasmic segment spans residues 233 to 271 (SSDTLVAALQPAPGRACKSSGSSSTSTHLNCAPESIAMI).

This sequence belongs to the DRAM/TMEM150 family. As to quaternary structure, interacts (via C-terminal cytoplasmic tail) with PI4KA.

It is found in the cell membrane. Its function is as follows. Regulates localization of phosphatidylinositol 4-kinase (PI4K) to the plasma membrane, possibly by reducing the association of TTC7 (TTC7A or TTC7B) with the PI4K complex. Acts as a regulator of phosphatidylinositol 4-phosphate (PtdIns(4)P) synthesis. May also play a role in fasting-induced catabolism. The sequence is that of Transmembrane protein 150A (Tmem150a) from Mus musculus (Mouse).